Consider the following 351-residue polypeptide: uncharacterized protein (351 aa).

The Mn(2+) site is built by Asp215, Asp226, His290, Glu319, and Glu333.

It belongs to the peptidase M24B family. The cofactor is Mn(2+).

This is an uncharacterized protein from Staphylococcus aureus (strain MW2).